The primary structure comprises 426 residues: Serine--tRNA ligase (426 aa).

An L-serine-binding site is contributed by 233–235 (TAE). ATP is bound at residue 264 to 266 (RRE). L-serine is bound at residue glutamate 287. An ATP-binding site is contributed by 351-354 (EISS). Position 386 (serine 386) interacts with L-serine.

The protein belongs to the class-II aminoacyl-tRNA synthetase family. Type-1 seryl-tRNA synthetase subfamily. In terms of assembly, homodimer. The tRNA molecule binds across the dimer.

It localises to the cytoplasm. The enzyme catalyses tRNA(Ser) + L-serine + ATP = L-seryl-tRNA(Ser) + AMP + diphosphate + H(+). It carries out the reaction tRNA(Sec) + L-serine + ATP = L-seryl-tRNA(Sec) + AMP + diphosphate + H(+). Its pathway is aminoacyl-tRNA biosynthesis; selenocysteinyl-tRNA(Sec) biosynthesis; L-seryl-tRNA(Sec) from L-serine and tRNA(Sec): step 1/1. Catalyzes the attachment of serine to tRNA(Ser). Is also able to aminoacylate tRNA(Sec) with serine, to form the misacylated tRNA L-seryl-tRNA(Sec), which will be further converted into selenocysteinyl-tRNA(Sec). This chain is Serine--tRNA ligase, found in Thermosipho africanus (strain TCF52B).